The sequence spans 236 residues: Small ribosomal subunit protein uS2c (236 aa).

It belongs to the universal ribosomal protein uS2 family.

Its subcellular location is the plastid. It is found in the chloroplast. In Agrostis stolonifera (Creeping bentgrass), this protein is Small ribosomal subunit protein uS2c (rps2).